The primary structure comprises 418 residues: Ig-like V-type domain-containing protein FAM187A (418 aa).

The N-terminal stretch at 1–18 (MRLAPTTVLLWAWGSLQA) is a signal peptide. At 19-376 (FEIVEKENIF…ASLSDPETRT (358 aa)) the chain is on the extracellular side. In terms of domain architecture, Ig-like V-type spans 267-361 (PWVPQVPIQF…IAGFRLGVTS (95 aa)). Residues Cys289 and Cys345 are joined by a disulfide bond. Asn317 carries an N-linked (GlcNAc...) asparagine glycan. Residues 377-397 (AVELTLIGYLLIAVVFVTIHL) form a helical membrane-spanning segment. Residues 398–418 (CRCCCQSRCCPNFSAQTLLQL) lie on the Cytoplasmic side of the membrane.

Belongs to the FAM187 family.

The protein localises to the membrane. The chain is Ig-like V-type domain-containing protein FAM187A (Fam187a) from Rattus norvegicus (Rat).